Here is a 135-residue protein sequence, read N- to C-terminus: Ribosome-binding factor A (135 aa).

It belongs to the RbfA family. Monomer. Binds 30S ribosomal subunits, but not 50S ribosomal subunits or 70S ribosomes.

It localises to the cytoplasm. Its function is as follows. One of several proteins that assist in the late maturation steps of the functional core of the 30S ribosomal subunit. Associates with free 30S ribosomal subunits (but not with 30S subunits that are part of 70S ribosomes or polysomes). Required for efficient processing of 16S rRNA. May interact with the 5'-terminal helix region of 16S rRNA. This is Ribosome-binding factor A from Sinorhizobium fredii (strain NBRC 101917 / NGR234).